The sequence spans 193 residues: Protein D5 (193 aa).

Repression of replication initiation (possible). This chain is Protein D5 (ddpE), found in Dictyostelium discoideum (Social amoeba).